The following is a 337-amino-acid chain: tRNA N6-adenosine threonylcarbamoyltransferase (337 aa).

His111 and His115 together coordinate Fe cation. Substrate is bound by residues 134–138 (LVSGG), Asp167, Gly180, and Asn272. Asp300 serves as a coordination point for Fe cation.

This sequence belongs to the KAE1 / TsaD family. Fe(2+) is required as a cofactor.

The protein resides in the cytoplasm. It carries out the reaction L-threonylcarbamoyladenylate + adenosine(37) in tRNA = N(6)-L-threonylcarbamoyladenosine(37) in tRNA + AMP + H(+). In terms of biological role, required for the formation of a threonylcarbamoyl group on adenosine at position 37 (t(6)A37) in tRNAs that read codons beginning with adenine. Is involved in the transfer of the threonylcarbamoyl moiety of threonylcarbamoyl-AMP (TC-AMP) to the N6 group of A37, together with TsaE and TsaB. TsaD likely plays a direct catalytic role in this reaction. The chain is tRNA N6-adenosine threonylcarbamoyltransferase from Salmonella choleraesuis (strain SC-B67).